A 361-amino-acid polypeptide reads, in one-letter code: Molybdopterin synthase catalytic subunit (361 aa).

Substrate is bound by residues 101–102 (HR), lysine 117, and 124–126 (KKE).

The protein belongs to the MoaE family. MOCS2B subfamily. As to quaternary structure, heterotetramer; composed of 2 small (Mocs2A) and 2 large (Mocs2B) subunits.

Its subcellular location is the cytoplasm. The enzyme catalyses 2 [molybdopterin-synthase sulfur-carrier protein]-C-terminal-Gly-aminoethanethioate + cyclic pyranopterin phosphate + H2O = molybdopterin + 2 [molybdopterin-synthase sulfur-carrier protein]-C-terminal Gly-Gly + 2 H(+). Its pathway is cofactor biosynthesis; molybdopterin biosynthesis. Catalytic subunit of the molybdopterin synthase complex, a complex that catalyzes the conversion of precursor Z into molybdopterin. Acts by mediating the incorporation of 2 sulfur atoms from thiocarboxylated Mocs2A into precursor Z to generate a dithiolene group. The protein is Molybdopterin synthase catalytic subunit of Drosophila persimilis (Fruit fly).